A 709-amino-acid polypeptide reads, in one-letter code: Methylmalonyl-CoA mutase (709 aa).

Substrate-binding positions include 73 to 77 (TIRQY), 183 to 185 (TIQ), arginine 195, lysine 222, histidine 232, and 271 to 273 (RLS). The 131-residue stretch at 579–709 (RPRMLVVKMG…ILDLIREARS (131 aa)) folds into the B12-binding domain. An adenosylcob(III)alamin-binding site is contributed by histidine 592.

It belongs to the methylmalonyl-CoA mutase family. In terms of assembly, homodimer. Adenosylcob(III)alamin serves as cofactor.

It carries out the reaction (R)-methylmalonyl-CoA = succinyl-CoA. It participates in metabolic intermediate metabolism; propanoyl-CoA degradation; succinyl-CoA from propanoyl-CoA: step 3/3. Radical enzyme that catalyzes the transformation of (2R)-methylmalonyl-CoA to succinyl-CoA. Is involved in the ethylmalonyl-CoA pathway for acetyl-CoA assimilation required for R.sphaeroides growth on acetate as sole carbon source. The polypeptide is Methylmalonyl-CoA mutase (Cereibacter sphaeroides (strain ATCC 17023 / DSM 158 / JCM 6121 / CCUG 31486 / LMG 2827 / NBRC 12203 / NCIMB 8253 / ATH 2.4.1.) (Rhodobacter sphaeroides)).